A 487-amino-acid polypeptide reads, in one-letter code: Betaine aldehyde dehydrogenase (487 aa).

2 residues coordinate K(+): serine 26 and aspartate 93. NAD(+) is bound at residue 150–152; it reads GAW. Lysine 162 (charge relay system) is an active-site residue. Residues 176-179 and 229-232 contribute to the NAD(+) site; these read KPSE and SVPT. Leucine 244 provides a ligand contact to K(+). The active-site Proton acceptor is the glutamate 250. Positions 252, 284, and 384 each coordinate NAD(+). Residue cysteine 284 is the Nucleophile of the active site. Cysteine 284 bears the Cysteine sulfenic acid (-SOH) mark. Positions 454 and 457 each coordinate K(+). The active-site Charge relay system is glutamate 461.

The protein belongs to the aldehyde dehydrogenase family. As to quaternary structure, dimer of dimers. K(+) serves as cofactor.

It catalyses the reaction betaine aldehyde + NAD(+) + H2O = glycine betaine + NADH + 2 H(+). The protein operates within amine and polyamine biosynthesis; betaine biosynthesis via choline pathway; betaine from betaine aldehyde: step 1/1. Its function is as follows. Involved in the biosynthesis of the osmoprotectant glycine betaine. Catalyzes the irreversible oxidation of betaine aldehyde to the corresponding acid. The chain is Betaine aldehyde dehydrogenase from Rhizobium johnstonii (strain DSM 114642 / LMG 32736 / 3841) (Rhizobium leguminosarum bv. viciae).